A 557-amino-acid polypeptide reads, in one-letter code: Coiled-coil domain-containing protein 22 homolog (557 aa).

Coiled coils occupy residues 260 to 350 (RLGQ…LQSQ) and 489 to 554 (ELTA…AGRN).

Belongs to the CCDC22 family.

The protein is Coiled-coil domain-containing protein 22 homolog of Anopheles gambiae (African malaria mosquito).